Here is a 539-residue protein sequence, read N- to C-terminus: E3 ubiquitin-protein ligase arc-1 (539 aa).

The RING-type zinc-finger motif lies at 6-53 (CNVCNEEYSARDPLKCPRVLTGCGHTICHNCAISIAGRNSSIFCPFDR). Residues 103 to 149 (LLNLECDEDSEHVAVIYCTVCDSNLCERCSESTHSTNVLSKHRRIPL) form a B box-type zinc finger. An ARF-like region spans residues 369–539 (ESRVVLLGLD…LSRLNGTCPV (171 aa)). Residues 376–383 (GLDGAGKT), 422–426 (DVGGL), and 481–484 (NRKD) each bind GTP.

The protein in the C-terminal section; belongs to the small GTPase superfamily. Arf family.

It carries out the reaction S-ubiquitinyl-[E2 ubiquitin-conjugating enzyme]-L-cysteine + [acceptor protein]-L-lysine = [E2 ubiquitin-conjugating enzyme]-L-cysteine + N(6)-ubiquitinyl-[acceptor protein]-L-lysine.. Its pathway is protein modification; protein ubiquitination. Functionally, acts as an E3 ubiquitin-protein ligase. This chain is E3 ubiquitin-protein ligase arc-1 (arc-1), found in Caenorhabditis elegans.